Here is a 290-residue protein sequence, read N- to C-terminus: Small ribosomal subunit protein uS2 (290 aa).

Residues 269-290 (WEAEASGDWAAESAQPNPETKW) are disordered.

This sequence belongs to the universal ribosomal protein uS2 family. In terms of assembly, component of the small ribosomal subunit. Mature ribosomes consist of a small (40S) and a large (60S) subunit. The 40S subunit contains about 33 different proteins and 1 molecule of RNA (18S). The 60S subunit contains about 49 different proteins and 3 molecules of RNA (25S, 5.8S and 5S). Interacts with rps21.

The protein localises to the cytoplasm. Functionally, required for the assembly and/or stability of the 40S ribosomal subunit. Required for the processing of the 20S rRNA-precursor to mature 18S rRNA in a late step of the maturation of 40S ribosomal subunits. This Talaromyces marneffei (strain ATCC 18224 / CBS 334.59 / QM 7333) (Penicillium marneffei) protein is Small ribosomal subunit protein uS2 (rps0).